The chain runs to 277 residues: Release factor glutamine methyltransferase (277 aa).

S-adenosyl-L-methionine-binding positions include 117-121 (GTGCG), aspartate 140, tryptophan 168, and asparagine 182. 182 to 185 (NPPY) contacts substrate.

Belongs to the protein N5-glutamine methyltransferase family. PrmC subfamily.

It catalyses the reaction L-glutaminyl-[peptide chain release factor] + S-adenosyl-L-methionine = N(5)-methyl-L-glutaminyl-[peptide chain release factor] + S-adenosyl-L-homocysteine + H(+). In terms of biological role, methylates the class 1 translation termination release factors RF1/PrfA and RF2/PrfB on the glutamine residue of the universally conserved GGQ motif. The sequence is that of Release factor glutamine methyltransferase from Buchnera aphidicola subsp. Acyrthosiphon pisum (strain APS) (Acyrthosiphon pisum symbiotic bacterium).